Here is a 934-residue protein sequence, read N- to C-terminus: Bifunctional uridylyltransferase/uridylyl-removing enzyme (934 aa).

The tract at residues 1-379 (MSAHDLKLEE…TFSRRKRKLS (379 aa)) is uridylyltransferase. A uridylyl-removing region spans residues 380 to 736 (DDGAFISENH…AKPHAFEAVT (357 aa)). The region spanning 496–613 (VDEHLLRCIA…IDFADTVQTM (118 aa)) is the HD domain. 2 consecutive ACT domains span residues 737–818 (EITV…DMLA) and 848–931 (VIEV…RSPQ).

It belongs to the GlnD family. Mg(2+) serves as cofactor.

The enzyme catalyses [protein-PII]-L-tyrosine + UTP = [protein-PII]-uridylyl-L-tyrosine + diphosphate. It carries out the reaction [protein-PII]-uridylyl-L-tyrosine + H2O = [protein-PII]-L-tyrosine + UMP + H(+). Its activity is regulated as follows. Uridylyltransferase (UTase) activity is inhibited by glutamine, while glutamine activates uridylyl-removing (UR) activity. In terms of biological role, modifies, by uridylylation and deuridylylation, the PII regulatory proteins (GlnB and homologs), in response to the nitrogen status of the cell that GlnD senses through the glutamine level. Under low glutamine levels, catalyzes the conversion of the PII proteins and UTP to PII-UMP and PPi, while under higher glutamine levels, GlnD hydrolyzes PII-UMP to PII and UMP (deuridylylation). Thus, controls uridylylation state and activity of the PII proteins, and plays an important role in the regulation of nitrogen assimilation and metabolism. In Brucella ovis (strain ATCC 25840 / 63/290 / NCTC 10512), this protein is Bifunctional uridylyltransferase/uridylyl-removing enzyme.